Consider the following 423-residue polypeptide: Histidine--tRNA ligase (423 aa).

Belongs to the class-II aminoacyl-tRNA synthetase family. As to quaternary structure, homodimer.

The protein resides in the cytoplasm. The enzyme catalyses tRNA(His) + L-histidine + ATP = L-histidyl-tRNA(His) + AMP + diphosphate + H(+). This is Histidine--tRNA ligase from Halorhodospira halophila (strain DSM 244 / SL1) (Ectothiorhodospira halophila (strain DSM 244 / SL1)).